The chain runs to 139 residues: Ribulose bisphosphate carboxylase small subunit (139 aa).

This sequence belongs to the RuBisCO small chain family. As to quaternary structure, heterohexadecamer of 8 large and 8 small subunits.

It localises to the plastid. The protein localises to the chloroplast. In terms of biological role, ruBisCO catalyzes two reactions: the carboxylation of D-ribulose 1,5-bisphosphate, the primary event in carbon dioxide fixation, as well as the oxidative fragmentation of the pentose substrate in the photorespiration process. Both reactions occur simultaneously and in competition at the same active site. Although the small subunit is not catalytic it is essential for maximal activity. The protein is Ribulose bisphosphate carboxylase small subunit of Cylindrotheca sp. (strain N1) (Marine diatom).